The sequence spans 567 residues: MTFNGWLQILIYIGILLLLVKPLGGYMTRVFTGERTLLSYVLGPLERGLYRIAGTDEREEQHWTTYSISMLLFSLAGFLMLYFLQRFQASLPYNPAGMTSIGPELSFNNAASFVTNTNWQNYGGESTMSYLVQMAGFTVQNFVSAATGIALAIALIRAFSRASGKAIGNFWVDLTRATLYVLLPACIVMTLVFVYLGVPQTLGPYVNATTLEGAQQTIAVGPVASQLAIKMLGTNGGGFFNANSAHPFENPDAISNLIQMLAIFAIGAALTNVFGRMVGNQRQGWAILAAMGTLFIAGVIVTYWAEAAGNPLVHALGVQGGNMEGKEVRFGITMSSLFAVITTAASCGAVNGMLGSFTAIGGMIPLINLQLGEVIVGGVGAGFYGILMFVIIAIFVSGLMVGRTPEYLGKKIEAKEVKMAMLAVLCLPAGMLIFTAISVVLPSAVASIGNPGPHGFSEILYAYSSAAANNGSAFAGLSANTTWYNITLGVVMLIGRFLVIVPALAIAGSLIAKKTVPASAGTFPTDGPLFVGLLVGTILIVGGLTFFPALALGPIVEHLSMIAGQAF.

Helical transmembrane passes span 5–25, 64–84, 136–156, 179–199, 254–274, 285–305, 328–350, 375–395, 421–441, 459–481, 486–506, and 529–549; these read GWLQILIYIGILLLLVKPLGG, TTYSISMLLFSLAGFLMLYFL, GFTVQNFVSAATGIALAIALI, LYVLLPACIVMTLVFVYLGVP, ISNLIQMLAIFAIGAALTNVF, WAILAAMGTLFIAGVIVTYWA, VRFGITMSSLFAVITTAASCGAV, IVGGVGAGFYGILMFVIIAIF, MLAVLCLPAGMLIFTAISVVL, ILYAYSSAAANNGSAFAGLSANT, ITLGVVMLIGRFLVIVPALAI, and LFVGLLVGTILIVGGLTFFPA.

It belongs to the KdpA family. In terms of assembly, the system is composed of three essential subunits: KdpA, KdpB and KdpC.

The protein resides in the cell inner membrane. Functionally, part of the high-affinity ATP-driven potassium transport (or Kdp) system, which catalyzes the hydrolysis of ATP coupled with the electrogenic transport of potassium into the cytoplasm. This subunit binds the periplasmic potassium ions and delivers the ions to the membrane domain of KdpB through an intramembrane tunnel. This is Potassium-transporting ATPase potassium-binding subunit from Rhizobium rhizogenes (strain K84 / ATCC BAA-868) (Agrobacterium radiobacter).